Here is a 114-residue protein sequence, read N- to C-terminus: Large ribosomal subunit protein P2 (114 aa).

The tract at residues 84–114 is disordered; that stretch reads TDALQAGSKKGETKEGPKEESDEDMGFGLFD. Over residues 92-102 the composition is skewed to basic and acidic residues; that stretch reads KKGETKEGPKE.

This sequence belongs to the eukaryotic ribosomal protein P1/P2 family. In terms of assembly, P1 and P2 exist as dimers at the large ribosomal subunit. Phosphorylated.

Functionally, plays an important role in the elongation step of protein synthesis. This is Large ribosomal subunit protein P2 (rpp-2) from Brugia malayi (Filarial nematode worm).